A 431-amino-acid chain; its full sequence is Glutamate-1-semialdehyde 2,1-aminomutase (431 aa).

Lysine 269 is modified (N6-(pyridoxal phosphate)lysine).

Belongs to the class-III pyridoxal-phosphate-dependent aminotransferase family. HemL subfamily. In terms of assembly, homodimer. Requires pyridoxal 5'-phosphate as cofactor.

Its subcellular location is the cytoplasm. It catalyses the reaction (S)-4-amino-5-oxopentanoate = 5-aminolevulinate. Its pathway is porphyrin-containing compound metabolism; protoporphyrin-IX biosynthesis; 5-aminolevulinate from L-glutamyl-tRNA(Glu): step 2/2. The protein operates within porphyrin-containing compound metabolism; chlorophyll biosynthesis. This Chlorobaculum parvum (strain DSM 263 / NCIMB 8327) (Chlorobium vibrioforme subsp. thiosulfatophilum) protein is Glutamate-1-semialdehyde 2,1-aminomutase.